Consider the following 219-residue polypeptide: Large ribosomal subunit protein uL3 (219 aa).

Belongs to the universal ribosomal protein uL3 family. In terms of assembly, part of the 50S ribosomal subunit. Forms a cluster with proteins L14 and L19.

In terms of biological role, one of the primary rRNA binding proteins, it binds directly near the 3'-end of the 23S rRNA, where it nucleates assembly of the 50S subunit. The protein is Large ribosomal subunit protein uL3 of Salinispora tropica (strain ATCC BAA-916 / DSM 44818 / JCM 13857 / NBRC 105044 / CNB-440).